The following is a 101-amino-acid chain: Large ribosomal subunit protein bL27 (101 aa).

The interval 1-21 is disordered; that stretch reads MAHKKAGGSSRNGRDSRSKRL.

The protein belongs to the bacterial ribosomal protein bL27 family.

The polypeptide is Large ribosomal subunit protein bL27 (Buchnera aphidicola subsp. Cinara cedri (strain Cc)).